Here is a 144-residue protein sequence, read N- to C-terminus: Signal recognition particle 19 kDa protein (144 aa).

A disordered region spans residues 117–144; the sequence is TRTQKTGGGDQSLQQGEGSKKGKGKKKK.

This sequence belongs to the SRP19 family. Component of a signal recognition particle complex that consists of a 7SL RNA molecule of 300 nucleotides and six protein subunits: SRP72, SRP68, SRP54, SRP19, SRP14 and SRP9. Interacts with IPO5, IPO7, IPO8, KPNB1 and TNPO1. Interactions with IPO8 and TNPO1 may be involved in SRP19 import into the nucleus.

It is found in the cytoplasm. The protein localises to the nucleus. The protein resides in the nucleolus. Its subcellular location is the nucleoplasm. Functionally, component of the signal recognition particle (SRP) complex, a ribonucleoprotein complex that mediates the cotranslational targeting of secretory and membrane proteins to the endoplasmic reticulum (ER). Binds directly to 7SL RNA. Mediates binding of SRP54 to the SRP complex. The sequence is that of Signal recognition particle 19 kDa protein from Canis lupus familiaris (Dog).